A 217-amino-acid polypeptide reads, in one-letter code: Probable transaldolase (217 aa).

Lysine 84 serves as the catalytic Schiff-base intermediate with substrate.

This sequence belongs to the transaldolase family. Type 3B subfamily.

It is found in the cytoplasm. It catalyses the reaction D-sedoheptulose 7-phosphate + D-glyceraldehyde 3-phosphate = D-erythrose 4-phosphate + beta-D-fructose 6-phosphate. Its pathway is carbohydrate degradation; pentose phosphate pathway; D-glyceraldehyde 3-phosphate and beta-D-fructose 6-phosphate from D-ribose 5-phosphate and D-xylulose 5-phosphate (non-oxidative stage): step 2/3. Its function is as follows. Transaldolase is important for the balance of metabolites in the pentose-phosphate pathway. In Roseiflexus sp. (strain RS-1), this protein is Probable transaldolase.